The sequence spans 177 residues: Ribulose bisphosphate carboxylase small subunit, chloroplastic (177 aa).

The N-terminal 55 residues, 1-55 (MASLMSNAAVVTASTAAQANMVAPFSGLKSTSAFPVSRKSNVDITSLATNGGRVN), are a transit peptide targeting the chloroplast.

This sequence belongs to the RuBisCO small chain family. As to quaternary structure, heterohexadecamer of 8 large and 8 small subunits.

It localises to the plastid. It is found in the chloroplast. Functionally, ruBisCO catalyzes two reactions: the carboxylation of D-ribulose 1,5-bisphosphate, the primary event in carbon dioxide fixation, as well as the oxidative fragmentation of the pentose substrate. Both reactions occur simultaneously and in competition at the same active site. Although the small subunit is not catalytic it is essential for maximal activity. In Silene latifolia subsp. alba (White campion), this protein is Ribulose bisphosphate carboxylase small subunit, chloroplastic.